The following is a 229-amino-acid chain: Peptidyl-prolyl cis-trans isomerase FKBP17-1, chloroplastic (229 aa).

The transit peptide at 1 to 63 directs the protein to the chloroplast; that stretch reads MIRCFAWTPL…SISLSIIAVT (63 aa). The PPIase FKBP-type domain maps to 105 to 225; the sequence is GDQIEIHYYG…VFDIELVSTR (121 aa).

It belongs to the FKBP-type PPIase family.

Its subcellular location is the plastid. The protein localises to the chloroplast thylakoid lumen. The catalysed reaction is [protein]-peptidylproline (omega=180) = [protein]-peptidylproline (omega=0). Functionally, PPIases accelerate the folding of proteins. It catalyzes the cis-trans isomerization of proline imidic peptide bonds in oligopeptides. This is Peptidyl-prolyl cis-trans isomerase FKBP17-1, chloroplastic (FKBP17-1) from Arabidopsis thaliana (Mouse-ear cress).